The sequence spans 520 residues: ADP,ATP carrier protein 4 (520 aa).

Transmembrane regions (helical) follow at residues L43–I63, I80–V100, I111–F131, F166–W186, F201–E221, F240–I260, L305–K325, A339–L359, F370–V390, L399–I419, L462–S482, and S485–V505.

Belongs to the ADP/ATP translocase tlc family.

It is found in the cell membrane. Functionally, provides the rickettsial cell with host ATP in exchange for rickettsial ADP. This is an obligate exchange system. This energy acquiring activity is an important component of rickettsial parasitism. The polypeptide is ADP,ATP carrier protein 4 (tlcD) (Rickettsia bellii (strain RML369-C)).